The following is a 135-amino-acid chain: Small ribosomal subunit protein uS8 (135 aa).

Belongs to the universal ribosomal protein uS8 family. As to quaternary structure, part of the 30S ribosomal subunit. Contacts proteins S5 and S12.

One of the primary rRNA binding proteins, it binds directly to 16S rRNA central domain where it helps coordinate assembly of the platform of the 30S subunit. The protein is Small ribosomal subunit protein uS8 of Salinispora arenicola (strain CNS-205).